A 232-amino-acid chain; its full sequence is Protein Mis18-alpha (232 aa).

Residues S36, S39, and S40 each carry the phosphoserine modification. A Mis18 domain is found at 79 to 177 (PLVFLCSGCR…SVEAIESYVL (99 aa)). The Zn(2+) site is built by C84, C87, C140, and C143. A Glycyl lysine isopeptide (Lys-Gly) (interchain with G-Cter in SUMO2) cross-link involves residue K161. S232 carries the phosphoserine modification.

This sequence belongs to the mis18 family. In terms of assembly, homodimer, and heterodimer with OIP5/MIS18B. Identified in a complex containing MIS18A, OIP5/MIS18B, MIS18BP1, RBBP7 and RBBP4.

The protein resides in the nucleus. It localises to the chromosome. The protein localises to the centromere. Its function is as follows. Required for recruitment of CENPA to centromeres and normal chromosome segregation during mitosis. In Pan troglodytes (Chimpanzee), this protein is Protein Mis18-alpha (MIS18A).